Consider the following 546-residue polypeptide: Chaperonin GroEL (546 aa).

ATP is bound by residues 29-32 (TLGP), Lys-50, 86-90 (DGTTT), Gly-414, 477-479 (NAL), and Asp-493. A disordered region spans residues 522–546 (KPEKDAPNPMAGMGGGGMGGMGGMM). A compositionally biased stretch (gly residues) spans 533-546 (GMGGGGMGGMGGMM).

Belongs to the chaperonin (HSP60) family. As to quaternary structure, forms a cylinder of 14 subunits composed of two heptameric rings stacked back-to-back. Interacts with the co-chaperonin GroES.

It localises to the cytoplasm. It catalyses the reaction ATP + H2O + a folded polypeptide = ADP + phosphate + an unfolded polypeptide.. Its function is as follows. Together with its co-chaperonin GroES, plays an essential role in assisting protein folding. The GroEL-GroES system forms a nano-cage that allows encapsulation of the non-native substrate proteins and provides a physical environment optimized to promote and accelerate protein folding. This chain is Chaperonin GroEL, found in Leptospira borgpetersenii serovar Hardjo-bovis (strain JB197).